The chain runs to 192 residues: UPF0149 protein VP2588 (192 aa).

The protein belongs to the UPF0149 family.

This chain is UPF0149 protein VP2588, found in Vibrio parahaemolyticus serotype O3:K6 (strain RIMD 2210633).